A 368-amino-acid polypeptide reads, in one-letter code: MAACTARRALAVGSRWWSRSLTGARWPRPLCAAAGAGAFSPASTTTTRRHLSSRNRPEGKVLETVGVFEVPKQNGKYETGQLFLHSIFGYRGVVLFPWQARLYDRDVASAAPEKAENPAGHGSKEVKGKTHTYYQVLIDARDCPHISQRSQTEAVTFLANHDDSRALYAIPGLDYVSHEDILPYTSTDQVPIQHELFERFLLYDQTKAPPFVARETLRAWQEKNHPWLELSDVHRETTENIRVTVIPFYMGMREAQNSHVYWWRYCIRLENLDSDVVQLRERHWRIFSLSGTLETVRGRGVVGREPVLSKEQPAFQYSSHVSLQASSGHMWGTFRFERPDGSHFDVRIPPFSLESNKDEKTPPSGLHW.

The transit peptide at 1–51 directs the protein to the mitochondrion; the sequence is MAACTARRALAVGSRWWSRSLTGARWPRPLCAAAGAGAFSPASTTTTRRHL. In terms of domain architecture, ApaG spans 235 to 360; it reads RETTENIRVT…FSLESNKDEK (126 aa). Phosphothreonine is present on T292.

As to quaternary structure, interacts with PCNA and POLD2. Interacts with SSBP1. Interacts with PRIMPOL; leading to enhance DNA polymerase activity of PRIMPOL. Interacts with POLH. Interacts with POLD1; leading to stimulate DNA polymerase activity of POLD1.

It localises to the mitochondrion matrix. It is found in the nucleus. Functionally, involved in DNA damage tolerance by regulating translesion synthesis (TLS) of templates carrying DNA damage lesions such as 8oxoG and abasic sites. May act by stimulating activity of DNA polymerases involved in TLS, such as PRIMPOL and polymerase delta (POLD1). The polypeptide is Polymerase delta-interacting protein 2 (Homo sapiens (Human)).